A 280-amino-acid chain; its full sequence is Golgi phosphoprotein 3-like (280 aa).

A disordered region spans residues 1–30 (MTTLTRRGRRADVGQENRVDSEDYIKDKDE). Residues 10 to 30 (RADVGQENRVDSEDYIKDKDE) show a composition bias toward basic and acidic residues. A 1,2-diacyl-sn-glycero-3-phospho-(1D-myo-inositol 4-phosphate)-binding residues include W62, R71, R152, and R155. Residues 171–182 (EKQNFLLFDMTT) form a beta-hairpin required for oligomerization region.

Belongs to the GOLPH3/VPS74 family. As to quaternary structure, homooligomer.

The protein resides in the golgi apparatus. It is found in the golgi stack membrane. It localises to the trans-Golgi network membrane. Functionally, phosphatidylinositol-4-phosphate-binding protein that may play a role in the process of vesicle budding at the Golgi and anterograde transport to the plasma membrane. The polypeptide is Golgi phosphoprotein 3-like (golph3l) (Xenopus tropicalis (Western clawed frog)).